A 1169-amino-acid chain; its full sequence is RecBCD enzyme subunit RecB (1169 aa).

The 436-residue stretch at 1-436 folds into the UvrD-like helicase ATP-binding domain; that stretch reads MNKILEKIQN…IVLKINHRSS (436 aa). Residues 1–839 form a DNA-binding and helicase activity, interacts with RecC region; the sequence is MNKILEKIQN…LLEIAKIFTI (839 aa). 18–25 lines the ATP pocket; that stretch reads ASAGTGKT. Residues 459–746 form the UvrD-like helicase C-terminal domain; the sequence is IEKIDFTNSL…ELMTIHKSKG (288 aa). The segment at 883–1169 is nuclease activity, interacts with RecD and RecA; sequence KEYTSSFSSL…ILELGIKRHL (287 aa). His-939, Asp-1052, and Asp-1065 together coordinate Mg(2+). Asp-1065 functions as the For nuclease activity in the catalytic mechanism.

This sequence belongs to the helicase family. UvrD subfamily. Heterotrimer of RecB, RecC and RecD. All subunits contribute to DNA-binding. Interacts with RecA. Mg(2+) is required as a cofactor.

The catalysed reaction is Exonucleolytic cleavage (in the presence of ATP) in either 5'- to 3'- or 3'- to 5'-direction to yield 5'-phosphooligonucleotides.. The enzyme catalyses Couples ATP hydrolysis with the unwinding of duplex DNA by translocating in the 3'-5' direction.. It carries out the reaction ATP + H2O = ADP + phosphate + H(+). In terms of biological role, a helicase/nuclease that prepares dsDNA breaks (DSB) for recombinational DNA repair. Binds to DSBs and unwinds DNA via a highly rapid and processive ATP-dependent bidirectional helicase activity. Unwinds dsDNA until it encounters a Chi (crossover hotspot instigator) sequence from the 3' direction. Cuts ssDNA a few nucleotides 3' to the Chi site. The properties and activities of the enzyme are changed at Chi. The Chi-altered holoenzyme produces a long 3'-ssDNA overhang and facilitates RecA-binding to the ssDNA for homologous DNA recombination and repair. Holoenzyme degrades any linearized DNA that is unable to undergo homologous recombination. In the holoenzyme this subunit contributes ATPase, 3'-5' helicase, exonuclease activity and loads RecA onto ssDNA. In Borreliella burgdorferi (strain ATCC 35210 / DSM 4680 / CIP 102532 / B31) (Borrelia burgdorferi), this protein is RecBCD enzyme subunit RecB.